We begin with the raw amino-acid sequence, 299 residues long: MPT51/MPB51 antigen (299 aa).

The signal sequence occupies residues 1–26 (MKGRSALLRALWIAALSFGLGGVAVA).

Belongs to the mycobacterial A85 antigen family. Homodimer.

It localises to the secreted. May have a role in host tissue attachment, whereby ligands may include the serum protein fibronectin and small sugars. This is MPT51/MPB51 antigen (mpt51) from Mycobacterium bovis (strain ATCC BAA-935 / AF2122/97).